A 433-amino-acid chain; its full sequence is Signal recognition particle 54 kDa protein (433 aa).

GTP is bound by residues 106–113 (GVEGSGKT), 186–190 (DTAGR), and 244–247 (TKMD).

This sequence belongs to the GTP-binding SRP family. SRP54 subfamily. Part of the signal recognition particle protein translocation system, which is composed of SRP and FtsY. Archaeal SRP consists of a 7S RNA molecule of 300 nucleotides and two protein subunits: SRP54 and SRP19.

It localises to the cytoplasm. The enzyme catalyses GTP + H2O = GDP + phosphate + H(+). In terms of biological role, involved in targeting and insertion of nascent membrane proteins into the cytoplasmic membrane. Binds to the hydrophobic signal sequence of the ribosome-nascent chain (RNC) as it emerges from the ribosomes. The SRP-RNC complex is then targeted to the cytoplasmic membrane where it interacts with the SRP receptor FtsY. The chain is Signal recognition particle 54 kDa protein from Pyrobaculum neutrophilum (strain DSM 2338 / JCM 9278 / NBRC 100436 / V24Sta) (Thermoproteus neutrophilus).